A 273-amino-acid chain; its full sequence is Testis-specific serine/threonine-protein kinase 6 (273 aa).

The Protein kinase domain maps to 12-267 (YKLGRTIGEG…AGQVARNGWL (256 aa)). Residues 18 to 26 (IGEGSYSKV) and lysine 41 contribute to the ATP site. Aspartate 135 (proton acceptor) is an active-site residue.

This sequence belongs to the protein kinase superfamily. CAMK Ser/Thr protein kinase family. Microtubule inner protein component of sperm flagellar doublet microtubules. Interacts with HSP90; this interaction stabilizes and activates TSSK6. Interacts with the heat shock proteins HSPCB, HSPA8 and HSPA1A. These interactions appear to be required for TSSK6 kinase activity. Interacts with TSACC; this interaction is direct and recruits TSACC to HSP90, which is essential for kinase activity. It depends on Mg(2+) as a cofactor. Autophosphorylated. Post-translationally, ubiquitinated; HSP90 activity negatively regulates ubiquitination and degradation. In terms of tissue distribution, expressed in the testis, localized to the heads of elongating spermatids.

The protein resides in the cytoplasm. It localises to the cytoskeleton. The protein localises to the flagellum axoneme. It is found in the nucleus. It catalyses the reaction L-seryl-[protein] + ATP = O-phospho-L-seryl-[protein] + ADP + H(+). It carries out the reaction L-threonyl-[protein] + ATP = O-phospho-L-threonyl-[protein] + ADP + H(+). Serine/threonine-protein kinase component of the sperm flagellar doublet microtubules. May act as a regulator of sperm motility by mediating phosphorylation of sperm doublet microtubule proteins. Plays a role in DNA condensation during postmeiotic chromatin remodeling and histone-to-protamine transition during spermatogenesis. The polypeptide is Testis-specific serine/threonine-protein kinase 6 (Mus musculus (Mouse)).